The chain runs to 514 residues: MKKLKINYLFIGILTLLLAAALWPSIPWFGKTENHIAAIQARGVLRVSTIDSPLTYSVINGKKYGLDYELAQQFANYLGVKLKVTVRQNISQLFDDLDNGNADLLAAGLVYDSARVKNYQPGPMYYSVSQQLVYRVGQYRPRSLATVNENQLTIAPGHVVVNDLQRLKETKFPDLSWKVDDKKGSTTLLEEVISGKLDYTIADSVAIGLFQRVHPELAVALDVTDEQPVTWFSRLDDNNTLSAALLDFFNSINEDGSLARIEEKYLGHGDDFDYVDTRSFLRAVDNVLPELEPLFKKYAKEIDWRLLAAISYQESHWDPLATSPTGVRGLMMLTKNTAQSLGLTDRTDAEQSISGGARYLEDMMAKVPETVPEDERIWFALAAYNMGYAHMLDARSLTVKTKGNPDSWTDVKQRLPLLSQKPYYSKLTYGYARGHEAYAYVENIRKYQISLVGYLQEKEKQEAEAMKLAQDYPAVSPEELNKAPFPLLSFLSQSSGYLTHSPSLLFTPQKKEEK.

The signal sequence occupies residues 1 to 30; that stretch reads MKKLKINYLFIGILTLLLAAALWPSIPWFG. Residues 31–269 are non-LT domain; the sequence is KTENHIAAIQ…RIEEKYLGHG (239 aa). The interval 270–514 is LT domain; that stretch reads DDFDYVDTRS…LFTPQKKEEK (245 aa). Glu-314 is an active-site residue.

It in the N-terminal section; belongs to the bacterial solute-binding protein 3 family. This sequence in the C-terminal section; belongs to the transglycosylase Slt family.

It localises to the cell outer membrane. The enzyme catalyses Exolytic cleavage of the (1-&gt;4)-beta-glycosidic linkage between N-acetylmuramic acid (MurNAc) and N-acetylglucosamine (GlcNAc) residues in peptidoglycan, from either the reducing or the non-reducing ends of the peptidoglycan chains, with concomitant formation of a 1,6-anhydrobond in the MurNAc residue.. In terms of biological role, murein-degrading enzyme that degrades murein glycan strands and insoluble, high-molecular weight murein sacculi, with the concomitant formation of a 1,6-anhydromuramoyl product. Lytic transglycosylases (LTs) play an integral role in the metabolism of the peptidoglycan (PG) sacculus. Their lytic action creates space within the PG sacculus to allow for its expansion as well as for the insertion of various structures such as secretion systems and flagella. In Salmonella paratyphi A (strain ATCC 9150 / SARB42), this protein is Membrane-bound lytic murein transglycosylase F.